The primary structure comprises 239 residues: Myogenic factor 6 (239 aa).

Residues 28–64 (HLDMSGVSPLYNGNDSPLSPGQDNVPSETGGESSGDE) are disordered. Residues 38-58 (YNGNDSPLSPGQDNVPSETGG) show a composition bias toward polar residues. The bHLH domain occupies 96-147 (DRRKAATLRERRRLKKINEAFDALKRKTVANPNQRLPKVEILRSAISYIERL). The segment at 155–189 (DEQERSQSGASDTRNDKEQNRPSGGDYRWKKASNT) is disordered.

Efficient DNA binding requires dimerization with another bHLH protein.

It is found in the nucleus. In terms of biological role, involved in muscle differentiation (myogenic factor). Induces fibroblasts to differentiate into myoblasts. Probable sequence specific DNA-binding protein. The polypeptide is Myogenic factor 6 (myf6) (Takifugu rubripes (Japanese pufferfish)).